Here is a 150-residue protein sequence, read N- to C-terminus: UPF0178 protein Sbal195_1808 (150 aa).

It belongs to the UPF0178 family.

In Shewanella baltica (strain OS195), this protein is UPF0178 protein Sbal195_1808.